A 234-amino-acid polypeptide reads, in one-letter code: uncharacterized protein (234 aa).

4 helical membrane-spanning segments follow: residues isoleucine 28 to serine 48, phenylalanine 67 to isoleucine 87, glycine 123 to isoleucine 143, and leucine 154 to tyrosine 174.

The protein belongs to the complex I subunit 2 family.

The protein localises to the mitochondrion membrane. This is an uncharacterized protein from Neurospora crassa (strain ATCC 24698 / 74-OR23-1A / CBS 708.71 / DSM 1257 / FGSC 987).